The following is a 632-amino-acid chain: MAU2 chromatid cohesion factor homolog (632 aa).

TPR repeat units lie at residues 453 to 486 and 493 to 526; these read GGFY…ANAE and SCSL…ASKI.

This sequence belongs to the SCC4/mau-2 family. In terms of assembly, interacts with Nipped-B to form the cohesin loading complex.

The protein localises to the nucleus. The protein resides in the nucleoplasm. Functionally, required for association of the cohesin complex with chromatin during interphase. Plays a role in sister chromatid cohesion and normal progression through prometaphase. This chain is MAU2 chromatid cohesion factor homolog, found in Drosophila melanogaster (Fruit fly).